A 93-amino-acid chain; its full sequence is uncharacterized protein (93 aa).

A helical membrane pass occupies residues 68-88 (WLVTVVLANGVVSLFLLGGLI).

The protein resides in the membrane. This is an uncharacterized protein from Mycoplasma pneumoniae (strain ATCC 29342 / M129 / Subtype 1) (Mycoplasmoides pneumoniae).